A 699-amino-acid polypeptide reads, in one-letter code: Polyribonucleotide nucleotidyltransferase (699 aa).

Asp493 and Asp499 together coordinate Mg(2+). Residues 560–620 (PLIANIEIDP…NKVNQAIEYI (61 aa)) enclose the KH domain. Positions 630-697 (GDMFEGKITR…DSGRIQLGKA (68 aa)) constitute an S1 motif domain.

It belongs to the polyribonucleotide nucleotidyltransferase family. Mg(2+) is required as a cofactor.

The protein localises to the cytoplasm. The enzyme catalyses RNA(n+1) + phosphate = RNA(n) + a ribonucleoside 5'-diphosphate. Its function is as follows. Involved in mRNA degradation. Catalyzes the phosphorolysis of single-stranded polyribonucleotides processively in the 3'- to 5'-direction. The chain is Polyribonucleotide nucleotidyltransferase from Thermosipho melanesiensis (strain DSM 12029 / CIP 104789 / BI429).